Consider the following 155-residue polypeptide: Small ribosomal subunit protein bS6 (155 aa).

The tract at residues 94 to 155 (EKHEEGPSAM…RPRRPREDRV (62 aa)) is disordered.

It belongs to the bacterial ribosomal protein bS6 family.

Binds together with bS18 to 16S ribosomal RNA. In Rhizobium johnstonii (strain DSM 114642 / LMG 32736 / 3841) (Rhizobium leguminosarum bv. viciae), this protein is Small ribosomal subunit protein bS6.